The following is a 590-amino-acid chain: Cytidine monophosphate-N-acetylneuraminic acid hydroxylase (590 aa).

Residues 14 to 112 enclose the Rieske domain; the sequence is LSPVEVANLK…VEMDENNGLL (99 aa). Positions 54, 56, 75, and 78 each coordinate [2Fe-2S] cluster.

This sequence belongs to the CMP-Neu5Ac hydroxylase family. Requires [2Fe-2S] cluster as cofactor.

The protein resides in the cytoplasm. The catalysed reaction is CMP-N-acetyl-beta-neuraminate + 2 Fe(II)-[cytochrome b5] + O2 + 2 H(+) = CMP-N-glycoloyl-beta-neuraminate + 2 Fe(III)-[cytochrome b5] + H2O. It functions in the pathway amino-sugar metabolism; N-acetylneuraminate metabolism. Its function is as follows. Sialic acids are components of carbohydrate chains of glycoconjugates and are involved in cell-cell recognition and cell-pathogen interactions. Catalyzes the conversion of CMP-N-acetylneuraminic acid (CMP-Neu5Ac) into its hydroxylated derivative CMP-N-glycolylneuraminic acid (CMP-Neu5Gc), a sialic acid abundantly expressed at the surface of many cells. The sequence is that of Cytidine monophosphate-N-acetylneuraminic acid hydroxylase (CMAH) from Macaca mulatta (Rhesus macaque).